The chain runs to 1440 residues: Bridge-like lipid transfer protein family member 3A (1440 aa).

Residues 3–95 (GIIKKQILKH…KVEVEMKTCE (93 aa)) form the Chorein N-terminal domain. Disordered regions lie at residues 267–307 (SAHQ…NSSS), 430–456 (ADSL…FQPP), and 751–780 (KPSA…TEHD). Over residues 287–307 (SAQQSWAQAFGGSQGNSNSSS) the composition is skewed to low complexity. Phosphoserine is present on residues S444, S446, S755, and S758. Positions 837–860 (ALLRLKEVLQRLQEQLTKDTESMT) form a coiled coil. Positions 891–1008 (VDADSAGSDS…ETAVNGQGEL (118 aa)) are disordered. Basic and acidic residues predominate over residues 911 to 920 (SEDRELKSDA). A compositionally biased stretch (low complexity) spans 985 to 995 (ASSSPAALKPP). Phosphoserine is present on residues S988, S1103, and S1106. The disordered stretch occupies residues 1106–1180 (SFDGVSLDSS…SPAANSSVSP (75 aa)). Over residues 1134 to 1150 (LLESESGPESVPPGSLS) the composition is skewed to low complexity. Residues 1151–1180 (NVSDNAGVQGSPLVNNYGQGSPAANSSVSP) are compositionally biased toward polar residues. The stretch at 1401–1435 (KELPILQKELIETKQALANANQDKEKLLQEIRKYN) forms a coiled coil.

Homodimer (Potential). Interacts with UHRF1.

The protein localises to the late endosome. Its function is as follows. Tube-forming lipid transport protein which probably mediates the transfer of lipids between membranes at organelle contact sites. May be involved in the retrograde traffic of vesicle clusters in the endocytic pathway to the Golgi complex. The sequence is that of Bridge-like lipid transfer protein family member 3A from Homo sapiens (Human).